The sequence spans 157 residues: MQASRARLFKEYKEVQREKVADPDIQLICDDTNIFKWTALIKGPSETPYEGGVFQLAFSVPEPYPLQPPQVRFLTKIFHPNVHFKTGEICLDILKNAWSPAWTLQSVCRAIIALMAHPEPDSPLNCDSGNLLRSGDVRGFNSMAQMYTRLAAMPKKG.

One can recognise a UBC core domain in the interval Ala3–Met153. Cys90 functions as the Glycyl thioester intermediate in the catalytic mechanism.

Belongs to the ubiquitin-conjugating enzyme family. As to quaternary structure, interacts with PEX22.

It is found in the peroxisome membrane. It catalyses the reaction S-ubiquitinyl-[E1 ubiquitin-activating enzyme]-L-cysteine + [E2 ubiquitin-conjugating enzyme]-L-cysteine = [E1 ubiquitin-activating enzyme]-L-cysteine + S-ubiquitinyl-[E2 ubiquitin-conjugating enzyme]-L-cysteine.. The protein operates within protein modification; protein ubiquitination. In terms of biological role, required for peroxisome biogenesis. Necessary for the developmental elimination of obsolete peroxisome matrix proteins. May be involved in the ubiquitination of PEX5, targeting it for recycling. Accepts the ubiquitin from the E1 complex and catalyzes its covalent attachment to other proteins. The sequence is that of Protein PEROXIN-4 (PEX4) from Arabidopsis thaliana (Mouse-ear cress).